A 243-amino-acid chain; its full sequence is MAELLLGVNIDHIATLRNARGTDYPDPVQAAFIAEQAGADGITVHLREDRRHITDRDVRILRQTLHTRMNLEMAVTEEMLAIAVETRPHFCCLVPEKRQEVTTEGGLDVAGQRDKMRDACARLAAAGIQVSLFIDADETQINAAAEVGAPFIEIHTGCYANAETDAEQAKELARIASAATLAARLGLKVNAGHGLTYHNVKAIAALPEMHELNIGHAIIGRAVMTGLKEAVAEMKRLMLEARG.

N9 serves as a coordination point for 3-amino-2-oxopropyl phosphate. 11–12 (DH) is a 1-deoxy-D-xylulose 5-phosphate binding site. R20 lines the 3-amino-2-oxopropyl phosphate pocket. H45 functions as the Proton acceptor in the catalytic mechanism. R47 and H52 together coordinate 1-deoxy-D-xylulose 5-phosphate. The active-site Proton acceptor is the E72. T102 provides a ligand contact to 1-deoxy-D-xylulose 5-phosphate. H193 (proton donor) is an active-site residue. Residues G194 and 215 to 216 (GH) contribute to the 3-amino-2-oxopropyl phosphate site.

The protein belongs to the PNP synthase family. As to quaternary structure, homooctamer; tetramer of dimers.

It localises to the cytoplasm. It carries out the reaction 3-amino-2-oxopropyl phosphate + 1-deoxy-D-xylulose 5-phosphate = pyridoxine 5'-phosphate + phosphate + 2 H2O + H(+). It participates in cofactor biosynthesis; pyridoxine 5'-phosphate biosynthesis; pyridoxine 5'-phosphate from D-erythrose 4-phosphate: step 5/5. Functionally, catalyzes the complicated ring closure reaction between the two acyclic compounds 1-deoxy-D-xylulose-5-phosphate (DXP) and 3-amino-2-oxopropyl phosphate (1-amino-acetone-3-phosphate or AAP) to form pyridoxine 5'-phosphate (PNP) and inorganic phosphate. The protein is Pyridoxine 5'-phosphate synthase of Salmonella typhimurium (strain LT2 / SGSC1412 / ATCC 700720).